The following is a 213-amino-acid chain: Guanylate kinase (213 aa).

A Guanylate kinase-like domain is found at 6-186 (GLLIILSSPS…TEERLKTIVS (181 aa)). 13–20 (SPSGAGKS) contributes to the ATP binding site.

The protein belongs to the guanylate kinase family.

It localises to the cytoplasm. It carries out the reaction GMP + ATP = GDP + ADP. Essential for recycling GMP and indirectly, cGMP. This is Guanylate kinase from Ruegeria pomeroyi (strain ATCC 700808 / DSM 15171 / DSS-3) (Silicibacter pomeroyi).